A 390-amino-acid polypeptide reads, in one-letter code: Heme chaperone HemW (390 aa).

One can recognise a Radical SAM core domain in the interval 15 to 254 (PMPGQPFGVY…DARLSAAGFA (240 aa)). An S-adenosyl-L-methionine-binding site is contributed by Tyr24. Residues Cys30, Cys34, and Cys37 each coordinate [4Fe-4S] cluster. Residues Gly82, 83–84 (GT), Glu115, Gln142, Arg154, and Asp179 contribute to the S-adenosyl-L-methionine site.

The protein belongs to the anaerobic coproporphyrinogen-III oxidase family. HemW subfamily. [4Fe-4S] cluster serves as cofactor.

Its subcellular location is the cytoplasm. Functionally, probably acts as a heme chaperone, transferring heme to an unknown acceptor. Binds one molecule of heme per monomer, possibly covalently. Binds 1 [4Fe-4S] cluster. The cluster is coordinated with 3 cysteines and an exchangeable S-adenosyl-L-methionine. The protein is Heme chaperone HemW of Mycobacterium tuberculosis (strain CDC 1551 / Oshkosh).